A 190-amino-acid polypeptide reads, in one-letter code: Pyridoxal 5'-phosphate synthase subunit PdxT (190 aa).

46-48 (GES) serves as a coordination point for L-glutamine. Cys-78 functions as the Nucleophile in the catalytic mechanism. Residues Arg-108 and 137–138 (IR) contribute to the L-glutamine site. Active-site charge relay system residues include His-174 and Glu-176.

The protein belongs to the glutaminase PdxT/SNO family. As to quaternary structure, in the presence of PdxS, forms a dodecamer of heterodimers. Only shows activity in the heterodimer.

The catalysed reaction is aldehydo-D-ribose 5-phosphate + D-glyceraldehyde 3-phosphate + L-glutamine = pyridoxal 5'-phosphate + L-glutamate + phosphate + 3 H2O + H(+). It catalyses the reaction L-glutamine + H2O = L-glutamate + NH4(+). Its pathway is cofactor biosynthesis; pyridoxal 5'-phosphate biosynthesis. In terms of biological role, catalyzes the hydrolysis of glutamine to glutamate and ammonia as part of the biosynthesis of pyridoxal 5'-phosphate. The resulting ammonia molecule is channeled to the active site of PdxS. The protein is Pyridoxal 5'-phosphate synthase subunit PdxT of Herpetosiphon aurantiacus (strain ATCC 23779 / DSM 785 / 114-95).